Consider the following 636-residue polypeptide: MENKWFLSMVRDDFKGGKINLEKAQKLLEKLDIQCNTIHVKCIFKDNDRLKQGRITIEEFRTIYRIIAHREEIIEIFNAYPENRKILFERNLIDFLTQEQYSLDINRSIVYEIIQKYEPIEEVKQAHQMSFEGFTRDMGSSECLLFNNECGSVYQDMTHPLSDYFISSSHNTYLISDQIMGPSNLWGYVSALVKGCRCLEIDCWDGSQNEPVVYHGYTLTSKLLFKTVIQAIHKYAFITSDYPVVLSLENHCSLSQQEVMADNLQSVFGDALLSDVLDDCPDRLPSPEALKFKILVRNKKIGTLKETHERKGFDKHGQVQECEEEEEAEQEEEENEVRDSEILDILQDDLEKEELKRGVGIKFFKKKKVKIATALSDLVIYTKVEKFRSFHYSRLYQQFNETNSIGETQARKLSKLRASEFILHTRKFITRIYPKATRADSSNFNPQEFWNIGCQMVALNFQTPGLPMDLQNGKFLENGNSGYILKPHFLRDGKSIFNPNKAPINSNPITLTIRLISGIQLPPSYHSSSNKADTLVIIEIFGVPNDQMKQQTRVIKKNAFSPRWNETFTFIIQVPELALIRFVVENQGLITGNEFLGQYTLPVLCMNKGYRRVPLFSKMGESLEPASLFIYVWYIR.

In terms of domain architecture, EF-hand spans 35-70 (CNTIHVKCIFKDNDRLKQGRITIEEFRTIYRIIAHR). The region spanning 155–299 (QDMTHPLSDY…LKFKILVRNK (145 aa)) is the PI-PLC X-box domain. Residues His-170 and His-215 contribute to the active site. A disordered region spans residues 311 to 338 (KGFDKHGQVQECEEEEEAEQEEEENEVR). Residues 318–345 (QVQECEEEEEAEQEEEENEVRDSEILDI) adopt a coiled-coil conformation. Positions 321-336 (ECEEEEEAEQEEEENE) are enriched in acidic residues. Residues 375 to 491 (LSDLVIYTKV…GYILKPHFLR (117 aa)) form the PI-PLC Y-box domain. One can recognise a C2 domain in the interval 491–617 (RDGKSIFNPN…KGYRRVPLFS (127 aa)).

In terms of assembly, interacts via its C2 domain with PtdIns(3)P and, to a lesser extent, PtdIns(5)P in vitro. Ca(2+) is required as a cofactor. In terms of tissue distribution, expressed specifically in testis.

The protein resides in the nucleus. It is found in the cytoplasm. It localises to the perinuclear region. The enzyme catalyses a 1,2-diacyl-sn-glycero-3-phospho-(1D-myo-inositol-4,5-bisphosphate) + H2O = 1D-myo-inositol 1,4,5-trisphosphate + a 1,2-diacyl-sn-glycerol + H(+). In terms of biological role, the production of the second messenger molecules diacylglycerol (DAG) and inositol 1,4,5-trisphosphate (IP3) is mediated by activated phosphatidylinositol-specific phospholipase C enzymes. In vitro, hydrolyzes PtdIns(4,5)P2 in a Ca(2+)-dependent manner. Triggers intracellular Ca(2+) oscillations in oocytes solely during M phase and is involved in inducing oocyte activation and initiating embryonic development up to the blastocyst stage. Is therefore a strong candidate for the egg-activating soluble sperm factor that is transferred from the sperm into the egg cytoplasm following gamete membrane fusion. May exert an inhibitory effect on phospholipase-C-coupled processes that depend on calcium ions and protein kinase C, including CFTR trafficking and function. The polypeptide is 1-phosphatidylinositol 4,5-bisphosphate phosphodiesterase zeta-1 (Sus scrofa (Pig)).